The following is a 299-amino-acid chain: Circadian clock oscillator protein KaiA (299 aa).

The psR domain, binds oxidized quinones stretch occupies residues 9–148 (SRPQIFICTL…LQLSKACRLP (140 aa)). One can recognise a KaiA N-terminal domain in the interval 9–179 (SRPQIFICTL…RLSQKLKERL (171 aa)). A flexible linker region spans residues 180–188 (GYLGVYYKR). In terms of domain architecture, KaiA C-terminal spans 189–297 (NPQQFFHKLT…CEMYRRSIPK (109 aa)).

In terms of assembly, homodimer. The KaiABC complex composition changes during the circadian cycle to control KaiC phosphorylation. Complexes KaiC(6), KaiA(2-4):KaiC(6), KaiB(6):KaiC(6) and KaiC(6):KaiB(6):KaiA(12) are among the most important forms, many form cooperatively. KaiA and CikA bind to the same region of the KaiB(fs) form and therefore compete.

In terms of biological role, key component of the KaiABC oscillator complex, which constitutes the main circadian regulator in cyanobacteria. Complex composition changes during the circadian cycle to control KaiC phosphorylation. KaiA stimulates KaiC autophosphorylation, while KaiB sequesters KaiA, leading to KaiC autodephosphorylation. KaiA binding to the KaiC CII domain during the subjective day yields KaiA(2-4):KaiC(6) complexes which stimulate KaiC autophosphorylation. Phospho-Ser-431 KaiC accumulation triggers binding of KaiB during the subjective night to form the KaiB(6):KaiC(6) complex, leading to changes in the output regulators CikA and SasA. KaiB(6):KaiC(6) formation exposes a site for KaiA binding on KaiB that sequesters KaiA from KaiC's CII domain, making the KaiC(6):KaiB(6):KaiA(12) complex resulting in KaiC autodephosphorylation. Complete dephosphorylation of KaiC leads to dissociation of KaiA(2):KaiB(1), completing 1 cycle of the Kai oscillator. Binds oxidized quinones via the N-terminal PsR domain, allowing it to sense redox changes and possibly mediate clock input. This Acaryochloris marina (strain MBIC 11017) protein is Circadian clock oscillator protein KaiA.